Reading from the N-terminus, the 262-residue chain is Tropinone reductase homolog At2g29310 (262 aa).

Position 13-37 (13-37) interacts with NADP(+); it reads LVTGAASGIGYAIVEELASFGAIIH. A substrate-binding site is contributed by serine 146. Tyrosine 159 acts as the Proton acceptor in catalysis.

The protein belongs to the short-chain dehydrogenases/reductases (SDR) family. SDR65C subfamily.

This chain is Tropinone reductase homolog At2g29310, found in Arabidopsis thaliana (Mouse-ear cress).